The following is a 172-amino-acid chain: Interferon tau-2 (172 aa).

Intrachain disulfides connect Cys1/Cys99 and Cys29/Cys139. Asn78 is a glycosylation site (N-linked (GlcNAc...) asparagine).

The protein belongs to the alpha/beta interferon family. IFN-alphaII subfamily. As to expression, constitutively and exclusively expressed in the mononuclear cells of the extraembryonic trophectoderm.

The protein localises to the secreted. Paracrine hormone primarily responsible for maternal recognition of pregnancy. Interacts with endometrial receptors, probably type I interferon receptors, and blocks estrogen receptor expression, preventing the estrogen-induced increase in oxytocin receptor expression in the endometrium. This results in the suppression of the pulsatile endometrial release of the luteolytic hormone prostaglandin F2-alpha, hindering the regression of the corpus luteum (luteolysis) and therefore a return to ovarian cyclicity. This, and a possible direct effect of IFN-tau on prostaglandin synthesis, leads in turn to continued ovarian progesterone secretion, which stimulates the secretion by the endometrium of the nutrients required for the growth of the conceptus. In summary, displays particularly high antiviral and antiproliferative potency concurrently with particular weak cytotoxicity, high antiluteolytic activity and immunomodulatory properties. In contrast with other IFNs, IFN-tau is not virally inducible. This chain is Interferon tau-2 (IFNT2), found in Bos taurus (Bovine).